We begin with the raw amino-acid sequence, 105 residues long: UPF0145 protein Ping_0381 (105 aa).

It belongs to the UPF0145 family.

This chain is UPF0145 protein Ping_0381, found in Psychromonas ingrahamii (strain DSM 17664 / CCUG 51855 / 37).